A 60-amino-acid chain; its full sequence is DNA gyrase inhibitor YacG (60 aa).

Zn(2+) is bound by residues cysteine 15, cysteine 18, cysteine 30, and cysteine 34.

This sequence belongs to the DNA gyrase inhibitor YacG family. Interacts with GyrB. Zn(2+) serves as cofactor.

In terms of biological role, inhibits all the catalytic activities of DNA gyrase by preventing its interaction with DNA. Acts by binding directly to the C-terminal domain of GyrB, which probably disrupts DNA binding by the gyrase. The polypeptide is DNA gyrase inhibitor YacG (Nitrobacter hamburgensis (strain DSM 10229 / NCIMB 13809 / X14)).